A 432-amino-acid polypeptide reads, in one-letter code: D-amino acid dehydrogenase (432 aa).

3–17 (VVILGSGVVGVASAW) is an FAD binding site.

This sequence belongs to the DadA oxidoreductase family. It depends on FAD as a cofactor.

It catalyses the reaction a D-alpha-amino acid + A + H2O = a 2-oxocarboxylate + AH2 + NH4(+). It participates in amino-acid degradation; D-alanine degradation; NH(3) and pyruvate from D-alanine: step 1/1. Functionally, oxidative deamination of D-amino acids. This chain is D-amino acid dehydrogenase, found in Escherichia coli O127:H6 (strain E2348/69 / EPEC).